The sequence spans 145 residues: 3-dehydroquinate dehydratase (145 aa).

The active-site Proton acceptor is Tyr23. Substrate contacts are provided by Asn74, His80, and Asp87. His100 functions as the Proton donor in the catalytic mechanism. Substrate-binding positions include 101 to 102 and Arg111; that span reads IS.

Belongs to the type-II 3-dehydroquinase family. As to quaternary structure, homododecamer.

It catalyses the reaction 3-dehydroquinate = 3-dehydroshikimate + H2O. Its pathway is metabolic intermediate biosynthesis; chorismate biosynthesis; chorismate from D-erythrose 4-phosphate and phosphoenolpyruvate: step 3/7. In terms of biological role, catalyzes a trans-dehydration via an enolate intermediate. This chain is 3-dehydroquinate dehydratase, found in Mycobacterium leprae (strain Br4923).